The chain runs to 202 residues: Putative 5'(3')-deoxyribonucleotidase (202 aa).

The active-site Nucleophile is Asp-22. The Mg(2+) site is built by Asp-22, Asp-24, and Asp-156. Residue Asp-24 is the Proton donor of the active site.

Belongs to the 5'(3')-deoxyribonucleotidase family. The cofactor is Mg(2+).

Its function is as follows. Dephosphorylates the 5' and 2'(3')-phosphates of deoxyribonucleotides. The protein is Putative 5'(3')-deoxyribonucleotidase of Chlorobaculum tepidum (strain ATCC 49652 / DSM 12025 / NBRC 103806 / TLS) (Chlorobium tepidum).